The sequence spans 414 residues: Coenzyme A biosynthesis bifunctional protein CoaBC (414 aa).

A phosphopantothenoylcysteine decarboxylase region spans residues 1–191 (MSARKRIVVG…ALPYDMAGVK (191 aa)). The tract at residues 192 to 414 (ALVTAGGTRE…IAAFLKSQDG (223 aa)) is phosphopantothenate--cysteine ligase. Residues 275-277 (MAA), aspartate 281, lysine 291, 293-294 (KK), 308-311 (DDVL), phenylalanine 332, lysine 350, and lysine 354 each bind CTP.

The protein in the N-terminal section; belongs to the HFCD (homo-oligomeric flavin containing Cys decarboxylase) superfamily. This sequence in the C-terminal section; belongs to the PPC synthetase family. In terms of assembly, homododecamer. Mg(2+) serves as cofactor. The cofactor is FMN.

The enzyme catalyses N-[(R)-4-phosphopantothenoyl]-L-cysteine + H(+) = (R)-4'-phosphopantetheine + CO2. The catalysed reaction is (R)-4'-phosphopantothenate + L-cysteine + CTP = N-[(R)-4-phosphopantothenoyl]-L-cysteine + CMP + diphosphate + H(+). It functions in the pathway cofactor biosynthesis; coenzyme A biosynthesis; CoA from (R)-pantothenate: step 2/5. It participates in cofactor biosynthesis; coenzyme A biosynthesis; CoA from (R)-pantothenate: step 3/5. With respect to regulation, two related chemical scaffolds that potently inhibit the activity of the CoaB moiety of CoaBC through a cryptic allosteric site that sits in the dimer interface region of the CoaB enzyme were identified. Catalyzes two sequential steps in the biosynthesis of coenzyme A. In the first step cysteine is conjugated to 4'-phosphopantothenate to form 4-phosphopantothenoylcysteine. In the second step the latter compound is decarboxylated to form 4'-phosphopantotheine. This is Coenzyme A biosynthesis bifunctional protein CoaBC from Mycolicibacterium smegmatis (strain ATCC 700084 / mc(2)155) (Mycobacterium smegmatis).